The sequence spans 403 residues: Ubiquitin-like modifier-activating enzyme 5 (403 aa).

ATP-binding residues include G81, D102, K125, N148, and N182. The Zn(2+) site is built by C224 and C227. The active-site Glycyl thioester intermediate is the C248. Zn(2+)-binding residues include C301 and C306. Over residues 306–315 the composition is skewed to basic and acidic residues; that stretch reads CRKQQEEYKK. Residues 306–337 are disordered; it reads CRKQQEEYKKRAPAQPTQETAPQEEEEVVHED. Residues 333–345 carry the UFM1-interacting sequence (UIS) motif; sequence VVHEDNEWGIELV. A linker region spans residues 346–376; that stretch reads SEVSEEELKNSSGPVPTLPEGITVAYTVPKK. S357 and S392 each carry phosphoserine. Residues 388-403 carry the UFC1-binding sequence (UFC) motif; sequence DSGESLEDLMARMKKM.

The protein belongs to the ubiquitin-activating E1 family. UBA5 subfamily. Homodimer; homodimerization is required for UFM1 activation. Interacts (via UIS motif) with UFM1; binds UFM1 via a trans-binding mechanism in which UFM1 interacts with distinct sites in both subunits of the UBA5 homodimer. Interacts (via C-terminus) with UFC1. Interacts (via UIS motif) with GABARAPL2 and, with lower affinity, with GABARAP and GABARAPL1.

It localises to the cytoplasm. It is found in the nucleus. Its subcellular location is the endoplasmic reticulum membrane. The protein resides in the golgi apparatus. In terms of biological role, E1-like enzyme which specifically catalyzes the first step in ufmylation. Activates UFM1 by first adenylating its C-terminal glycine residue with ATP, and thereafter linking this residue to the side chain of a cysteine residue in E1, yielding a UFM1-E1 thioester and free AMP. Activates UFM1 via a trans-binding mechanism, in which UFM1 interacts with distinct sites in both subunits of the UBA5 homodimer. Trans-binding also promotes stabilization of the UBA5 homodimer, and enhances ATP-binding. Transfer of UFM1 from UBA5 to the E2-like enzyme UFC1 also takes place using a trans mechanism. Ufmylation plays a key role in various processes, such as ribosome recycling, response to DNA damage, interferon response or reticulophagy (also called ER-phagy). Ufmylation is essential for erythroid differentiation of both megakaryocytes and erythrocytes. The protein is Ubiquitin-like modifier-activating enzyme 5 of Rattus norvegicus (Rat).